The primary structure comprises 341 residues: Ferrochelatase (341 aa).

Fe cation contacts are provided by His196 and Glu277.

It belongs to the ferrochelatase family.

It is found in the cytoplasm. It catalyses the reaction heme b + 2 H(+) = protoporphyrin IX + Fe(2+). It participates in porphyrin-containing compound metabolism; protoheme biosynthesis; protoheme from protoporphyrin-IX: step 1/1. Functionally, catalyzes the ferrous insertion into protoporphyrin IX. The chain is Ferrochelatase from Synechococcus sp. (strain JA-3-3Ab) (Cyanobacteria bacterium Yellowstone A-Prime).